The following is a 550-amino-acid chain: MESSRILITSALPYANGPLHFGHITGAYLPADVYARFQRLQGKEVLYICGSDEYGIAITLNAELAGMGYQEYVDMYHKLHKDTFKKLGISVDFFSRTTNTYHPAIVQDFYRNLQERGLVENQVTEQLYSEEEGKFLADRYVVGTCPKCGFDRARGDECQQCGADYEARDLKEPRSKLTGAALSLRDTEHAYLHLERMKEDLLAFVQGIYLRPHIRNFVTDYIEHLRPRAVTRDLSWGIPVPDLENKVFYVWFDAPIGYISGTMDWAASIGDPEAWKKFWLDDTVTYAQFIGKDNTSFHAVIFPAMEIGQSLPYKKVDALVTSEFLLLEGFQFSKSDGNFIDMDAFLETYSLDKLRYVLAAIAPETSDSEFSFQEFKTRCNSELVGKYGNFVNRVLAFAVKNGCTELSSPQLEQKDLDFISKSQKLAKDAAEHYAQYSLRKACSTIMELAALGNGYFNDEAPWKLAKEGNWNRVRAILFCACYCQKLLALISYPIMPETALKILEMIAPHSLDLGSQDPDRLQSLWTDSFFDYSEEKFSLKEPELLFTMVE.

The 'HIGH' region signature appears at 13-23 (PYANGPLHFGH). Positions 145, 148, 158, and 161 each coordinate Zn(2+). A 'KMSKS' region motif is present at residues 331–335 (QFSKS). Residue Lys334 coordinates ATP.

The protein belongs to the class-I aminoacyl-tRNA synthetase family. MetG type 1 subfamily. As to quaternary structure, monomer. Requires Zn(2+) as cofactor.

It localises to the cytoplasm. The enzyme catalyses tRNA(Met) + L-methionine + ATP = L-methionyl-tRNA(Met) + AMP + diphosphate. Is required not only for elongation of protein synthesis but also for the initiation of all mRNA translation through initiator tRNA(fMet) aminoacylation. The chain is Methionine--tRNA ligase from Chlamydia trachomatis serovar A (strain ATCC VR-571B / DSM 19440 / HAR-13).